The following is a 126-amino-acid chain: Large ribosomal subunit protein bL12 (126 aa).

It belongs to the bacterial ribosomal protein bL12 family. In terms of assembly, homodimer. Part of the ribosomal stalk of the 50S ribosomal subunit. Forms a multimeric L10(L12)X complex, where L10 forms an elongated spine to which 2 to 4 L12 dimers bind in a sequential fashion. Binds GTP-bound translation factors.

Its function is as follows. Forms part of the ribosomal stalk which helps the ribosome interact with GTP-bound translation factors. Is thus essential for accurate translation. The sequence is that of Large ribosomal subunit protein bL12 from Nitrosospira multiformis (strain ATCC 25196 / NCIMB 11849 / C 71).